Reading from the N-terminus, the 468-residue chain is uncharacterized protein (468 aa).

Coiled coils occupy residues 10–94 and 147–279; these read NEAL…VKEL and FVEL…EASI. Residues 324–369 are disordered; that stretch reads TPRTVDPIPEGTIIKKESSDDAMFSGLKKSKPKKSNKSNNNQADSD. Position 342 is a phosphoserine (Ser-342). Residues 399 to 445 adopt a coiled-coil conformation; that stretch reads VEQLKSRIAHFKEQQDSVTKQRIEKAKQEIEKLEAKYNSKEEKTLTE.

The protein resides in the cytoplasm. This is an uncharacterized protein from Schizosaccharomyces pombe (strain 972 / ATCC 24843) (Fission yeast).